The primary structure comprises 553 residues: NAD(P)H-quinone oxidoreductase chain 4 2 (553 aa).

14 helical membrane-spanning segments follow: residues 6–26 (FPWLSAIILLPLLASFLIPVI), 34–54 (VRWFALGVGLADFILMCYVFL), 87–107 (ISAPLVLLAGLVTTLSILAAW), 115–135 (LFYFLMLLLYAAQIGVFVAQD), 136–156 (LLLFFLMWEIELIPVYLLVSI), 169–189 (FLLYTAAASIFILVAGLAMAL), 210–230 (ALELVLYAGLLIAFGVKLAIF), 244–264 (SAPVSMILAGVLLKMGGYGLI), 276–296 (IYFAPILAILGVVNIIYGAFA), 312–332 (VSHMGFVLLGIASFTDVGISG), 333–353 (AMLQMLSHGLIAAVLFFLAGV), 376–396 (VFALFTAGAMASLALPGMSGF), 418–438 (VVTVFLASVGLILTPIYLLSM), and 487–507 (IFIAVSFLALIVAIGFYPQLA).

This sequence belongs to the complex I subunit 4 family.

The protein localises to the cellular thylakoid membrane. It carries out the reaction a plastoquinone + NADH + (n+1) H(+)(in) = a plastoquinol + NAD(+) + n H(+)(out). It catalyses the reaction a plastoquinone + NADPH + (n+1) H(+)(in) = a plastoquinol + NADP(+) + n H(+)(out). In terms of biological role, NDH-1 shuttles electrons from NAD(P)H, via FMN and iron-sulfur (Fe-S) centers, to quinones in the respiratory chain. The immediate electron acceptor for the enzyme in this species is believed to be plastoquinone. Couples the redox reaction to proton translocation (for every two electrons transferred, four hydrogen ions are translocated across the cytoplasmic membrane), and thus conserves the redox energy in a proton gradient. This Microcystis aeruginosa (strain NIES-843 / IAM M-2473) protein is NAD(P)H-quinone oxidoreductase chain 4 2.